Here is a 379-residue protein sequence, read N- to C-terminus: Homoserine O-succinyltransferase (379 aa).

Residues 51 to 360 (NAVLICHALS…DAPQGHDAFL (310 aa)) form the AB hydrolase-1 domain. Ser-157 functions as the Nucleophile in the catalytic mechanism. Arg-227 contributes to the substrate binding site. Active-site residues include Asp-323 and His-356. Position 357 (Asp-357) interacts with substrate.

It belongs to the AB hydrolase superfamily. MetX family. In terms of assembly, homodimer.

Its subcellular location is the cytoplasm. It carries out the reaction L-homoserine + succinyl-CoA = O-succinyl-L-homoserine + CoA. It functions in the pathway amino-acid biosynthesis; L-methionine biosynthesis via de novo pathway; O-succinyl-L-homoserine from L-homoserine: step 1/1. Its function is as follows. Transfers a succinyl group from succinyl-CoA to L-homoserine, forming succinyl-L-homoserine. In Pseudomonas aeruginosa (strain LESB58), this protein is Homoserine O-succinyltransferase.